We begin with the raw amino-acid sequence, 480 residues long: Probable tRNA N6-adenosine threonylcarbamoyltransferase, mitochondrial (480 aa).

A mitochondrion-targeting transit peptide spans 1 to 86 (MVRLFLTLSP…NPNFDDNLVV (86 aa)). Residues histidine 194 and histidine 198 each coordinate a divalent metal cation. Substrate contacts are provided by residues 217-221 (LISGG), aspartate 250, glycine 265, glutamate 269, 373-374 (SN), and threonine 401. Aspartate 402 provides a ligand contact to a divalent metal cation.

This sequence belongs to the KAE1 / TsaD family. As to quaternary structure, homodimer. It depends on a divalent metal cation as a cofactor. As to expression, expressed in young developing leaves, roots, flowers and siliques.

The protein resides in the mitochondrion inner membrane. It catalyses the reaction L-threonylcarbamoyladenylate + adenosine(37) in tRNA = N(6)-L-threonylcarbamoyladenosine(37) in tRNA + AMP + H(+). In terms of biological role, required for the formation of a threonylcarbamoyl group on adenosine at position 37 (t(6)A37) in mitochondrial tRNAs that read codons beginning with adenine. Probably involved in the transfer of the threonylcarbamoyl moiety of threonylcarbamoyl-AMP (TC-AMP) to the N6 group of A37. Involved in mitochondrial genome maintenance. May have a role in embryonic development in plants. The chain is Probable tRNA N6-adenosine threonylcarbamoyltransferase, mitochondrial from Arabidopsis thaliana (Mouse-ear cress).